The primary structure comprises 507 residues: Myocyte-specific enhancer factor 2A (507 aa).

Residues 3-57 (RKKIQITRIMDERNRQVTFTKRKFGLMKKAYELSVLCDCEIALIIFNSSNKLFQY) form the MADS-box domain. Positions 58–86 (ASTDMDKVLLKYTEYNEPHESGTNSDIVE) form a DNA-binding region, mef2-type. Ser59 carries the phosphoserine; by CK2 modification. 2 positions are modified to phosphoserine: Ser98 and Ser235. A disordered region spans residues 175-269 (ADSSMLSPPQ…GGGNLGMNSR (95 aa)). Over residues 209–245 (LSTSDLTVPNGAGSSPVGNGFVNSRASPNLVGTTGAN) the composition is skewed to polar residues. Lys249 is subject to N6-acetyllysine. At Ser255 the chain carries Phosphoserine. The tract at residues 266 to 283 (MNSRKPDLRVVIPPSSKG) is required for interaction with MAPKs. Positions 289–296 (SEEEELEL) are beta domain. Thr312 and Thr319 each carry phosphothreonine; by MAPK7 and MAPK14. Ser355 is subject to Phosphoserine; by MAPK7. Residues 390–402 (SNLSINTNQNINI) show a composition bias toward polar residues. Residues 390–507 (SNLSINTNQN…KRMRMDAWVT (118 aa)) form a disordered region. An N6-acetyllysine; alternate modification is found at Lys403. Residue Lys403 forms a Glycyl lysine isopeptide (Lys-Gly) (interchain with G-Cter in SUMO); alternate linkage. Ser408 is modified (phosphoserine; by CDK5). Thr415 is modified (phosphothreonine). Pro residues predominate over residues 423 to 443 (QPPPPSQAPQPQPPQPQPQPQ). Ser453 bears the Phosphoserine mark. Residues 453–466 (SPVDSLSSSSSSYD) show a composition bias toward low complexity. Composition is skewed to basic and acidic residues over residues 467–477 (GSDREDPRGDF) and 488–507 (NTED…AWVT).

This sequence belongs to the MEF2 family. In terms of assembly, binds DNA as a homo- or heterodimer. Dimerizes with MEF2D. Interacts with HDAC7. Interacts with PIAS1; the interaction enhances sumoylation. Interacts with HDAC4, HDAC9 and SLC2A4RG. Interacts (via the N-terminal) with MAPK7; the interaction results in the phosphorylation and transcriptional activity of MEF2A. Post-translationally, constitutive phosphorylation on Ser-408 promotes Lys-403 sumoylation thus preventing acetylation at this site. Dephosphorylation on Ser-408 by PPP3CA upon neuron depolarization promotes a switch from sumoylation to acetylation on residue Lys-403 leading to inhibition of dendrite claw differentiation. Phosphorylation on Thr-312 and Thr-319 are the main sites involved in p38 MAPK signaling and activate transcription. Phosphorylated on these sites by MAPK14/p38alpha and MAPK11/p38beta, but not by MAPK13/p38delta nor by MAPK12/p38gamma. Phosphorylation on Ser-408 by CDK5 induced by neurotoxicity inhibits MEF2A transcriptional activation leading to apoptosis of cortical neurons. Phosphorylation on Thr-312, Thr-319 and Ser-355 can be induced by EGF. In terms of processing, sumoylation on Lys-403 is enhanced by PIAS1 and represses transcriptional activity. Phosphorylation on Ser-408 is required for sumoylation. Has no effect on nuclear location nor on DNA binding. Sumoylated with SUMO1 and, to a lesser extent with SUMO2 and SUMO3. PIASx facilitates sumoylation in postsynaptic dendrites in the cerebellar cortex and promotes their morphogenesis. Acetylation on Lys-403 activates transcriptional activity. Acetylated by p300 on several sites in diffentiating myocytes. Acetylation on Lys-4 increases DNA binding and transactivation. Hyperacetylation by p300 leads to enhanced cardiac myocyte growth and heart failure. Post-translationally, proteolytically cleaved on several sites by caspase 3 and caspase 7 following neurotoxicity. Preferentially cleaves the CDK5-mediated hyperphosphorylated form which leads to cortical neuron apoptosis and transcriptional inactivation.

The protein resides in the nucleus. Transcriptional activator which binds specifically to the MEF2 element, 5'-YTA[AT](4)TAR-3', found in numerous muscle-specific genes. Also involved in the activation of numerous growth factor- and stress-induced genes. Mediates cellular functions not only in skeletal and cardiac muscle development, but also in neuronal differentiation and survival. Plays diverse roles in the control of cell growth, survival and apoptosis via p38 MAPK signaling in muscle-specific and/or growth factor-related transcription. In cerebellar granule neurons, phosphorylated and sumoylated MEF2A represses transcription of NUR77 promoting synaptic differentiation. Associates with chromatin to the ZNF16 promoter. This chain is Myocyte-specific enhancer factor 2A (MEF2A), found in Sus scrofa (Pig).